Here is a 201-residue protein sequence, read N- to C-terminus: Small ribosomal subunit protein uS4c (201 aa).

A disordered region spans residues 15 to 43 (LGALPGLTSKRPTPGSDLRNQSRSGKRSQ). An S4 RNA-binding domain is found at 89 to 149 (MRLDNILFRL…DEQKSRALIQ (61 aa)).

The protein belongs to the universal ribosomal protein uS4 family. As to quaternary structure, part of the 30S ribosomal subunit. Contacts protein S5. The interaction surface between S4 and S5 is involved in control of translational fidelity.

The protein resides in the plastid. It is found in the chloroplast. Its function is as follows. One of the primary rRNA binding proteins, it binds directly to 16S rRNA where it nucleates assembly of the body of the 30S subunit. Functionally, with S5 and S12 plays an important role in translational accuracy. The chain is Small ribosomal subunit protein uS4c (rps4) from Nandina domestica (Heavenly bamboo).